The following is a 351-amino-acid chain: Circumsporozoite protein (351 aa).

Positions 1-22 are cleaved as a signal peptide; it reads MKNFILLAVSSILLVDLLPTHF. A disordered region spans residues 50 to 266; that stretch reads AQVRQSASRG…GQNNQGANVP (217 aa). Over residues 61-96 the composition is skewed to basic and acidic residues; it reads GLGEKPKEGADKEKKKEKEKEKEEEPKKPNENKLKQ. Positions 80–88 are required for the binding to heparan sulfate proteoglycans (HSPGs) on the surface of host hepatocytes; it reads KEKEEEPKK. The segment at 93-97 is region I; contains the proteolytic cleavage site; that stretch reads KLKQP. The span at 97 to 219 shows a compositional bias: low complexity; that stretch reads PEQPAAGAGG…AGARGEQPAA (123 aa). Tandem repeats lie at residues 101 to 109, 110 to 118, 119 to 127, 128 to 136, 137 to 145, 146 to 154, 155 to 163, 164 to 172, 173 to 181, 182 to 190, 191 to 199, 200 to 208, 209 to 217, and 218 to 226. Positions 101-226 are 14 X 9 AA tandem repeats of A-A-G-A-[GR]-G-E-Q-P; the sequence is AAGAGGEQPA…PAAGAGGEQP (126 aa). Residues 244–256 show a composition bias toward gly residues; that stretch reads GARGGNAGAGKGQ. A TSP type-1 domain is found at 277–329; it reads KIRSSVTTEWTPCSVTCGNGVRIRRKGHAGNKKAEDLTMDDLEVEACVMDKCA. 2 disulfides stabilise this stretch: Cys-289–Cys-323 and Cys-293–Cys-328. The O-linked (Fuc) threonine glycan is linked to Thr-292. Cys-328 is lipidated: GPI-anchor amidated cysteine. Residues 329–351 constitute a propeptide, removed in mature form; that stretch reads AGIFNVVSNSLGLVILLVLALFN.

Belongs to the plasmodium circumsporozoite protein family. In terms of processing, during host cell invasion, proteolytically cleaved at the cell membrane in the region I by a papain-like cysteine protease of parasite origin. Cleavage is triggered by the sporozoite contact with highly sulfated heparan sulfate proteoglycans (HSPGs) present on the host hepatocyte cell surface. Cleavage exposes the TSP type-1 (TSR) domain and is required for productive invasion of host hepatocytes but not for adhesion to the host cell membrane. Cleavage is dispensable for sporozoite development in the oocyst, motility and for traversal of host and vector cells. O-glycosylated; maybe by POFUT2.

It localises to the cell membrane. The protein localises to the cytoplasm. Essential sporozoite protein. In the mosquito vector, required for sporozoite development in the oocyst, migration through the vector hemolymph and entry into the vector salivary glands. In the vertebrate host, required for sporozoite migration through the host dermis and infection of host hepatocytes. Binds to highly sulfated heparan sulfate proteoglycans (HSPGs) on the surface of host hepatocytes. Functionally, in the vertebrate host, binds to highly sulfated heparan sulfate proteoglycans (HSPGs) on the surface of host hepatocytes and is required for sporozoite invasion of the host hepatocytes. The polypeptide is Circumsporozoite protein (Plasmodium knowlesi (strain nuri)).